A 430-amino-acid polypeptide reads, in one-letter code: Probable histidine--tRNA ligase, cytoplasmic (430 aa).

The protein belongs to the class-II aminoacyl-tRNA synthetase family.

Its subcellular location is the cytoplasm. It catalyses the reaction tRNA(His) + L-histidine + ATP = L-histidyl-tRNA(His) + AMP + diphosphate + H(+). The polypeptide is Probable histidine--tRNA ligase, cytoplasmic (Vairimorpha ceranae (strain BRL01) (Microsporidian parasite)).